The sequence spans 161 residues: Vasotocin-neurophysin VT (161 aa).

The N-terminal stretch at 1–22 (MSAMGWTLLAAALLAISAQSNG) is a signal peptide. C23 and C28 are disulfide-bonded. The residue at position 31 (G31) is a Glycine amide. Cystine bridges form between C43–C91, C46–C58, C52–C81, C59–C71, C99–C111, C105–C123, and C112–C117.

Belongs to the vasopressin/oxytocin family.

It localises to the secreted. In terms of biological role, vasotocin is an antidiuretic hormone. In Eptatretus stoutii (Pacific hagfish), this protein is Vasotocin-neurophysin VT.